A 323-amino-acid polypeptide reads, in one-letter code: GTP 3',8-cyclase (323 aa).

The region spanning 4 to 228 is the Radical SAM core domain; that stretch reads KYGRSIDYLR…VPVNIQNNGP (225 aa). R13 serves as a coordination point for GTP. Positions 20 and 24 each coordinate [4Fe-4S] cluster. Residue Y26 participates in S-adenosyl-L-methionine binding. C27 is a binding site for [4Fe-4S] cluster. R63 is a binding site for GTP. G67 is a binding site for S-adenosyl-L-methionine. T94 lines the GTP pocket. Residue S118 coordinates S-adenosyl-L-methionine. K155 contacts GTP. Residue M189 coordinates S-adenosyl-L-methionine. Positions 252 and 255 each coordinate [4Fe-4S] cluster. A GTP-binding site is contributed by 257 to 259; sequence RMR. Position 269 (C269) interacts with [4Fe-4S] cluster.

This sequence belongs to the radical SAM superfamily. MoaA family. In terms of assembly, monomer and homodimer. It depends on [4Fe-4S] cluster as a cofactor.

The enzyme catalyses GTP + AH2 + S-adenosyl-L-methionine = (8S)-3',8-cyclo-7,8-dihydroguanosine 5'-triphosphate + 5'-deoxyadenosine + L-methionine + A + H(+). Its pathway is cofactor biosynthesis; molybdopterin biosynthesis. Its function is as follows. Catalyzes the cyclization of GTP to (8S)-3',8-cyclo-7,8-dihydroguanosine 5'-triphosphate. This Petrotoga mobilis (strain DSM 10674 / SJ95) protein is GTP 3',8-cyclase.